The following is a 185-amino-acid chain: Large ribosomal subunit protein uL5c (185 aa).

This sequence belongs to the universal ribosomal protein uL5 family. Part of the 50S ribosomal subunit; contacts the 5S rRNA.

It localises to the plastid. The protein resides in the chloroplast. Its function is as follows. Binds 5S rRNA, forms part of the central protuberance of the 50S subunit. The protein is Large ribosomal subunit protein uL5c (rpl5) of Chlorokybus atmophyticus (Soil alga).